We begin with the raw amino-acid sequence, 625 residues long: Sphingomyelin phosphodiesterase (625 aa).

The interval 1 to 20 is disordered; that stretch reads MPRHGVSPGQGLPRSGREQA. An N-terminal signal peptide occupies residues 1–40; the sequence is MPRHGVSPGQGLPRSGREQASDRSLGAPCLRLLWLGLALA. The 85-residue stretch at 81–165 folds into the Saposin B-type domain; it reads WNLTCPTCKG…LLGSSCGHWD (85 aa). Asn-82 carries N-linked (GlcNAc...) asparagine glycosylation. Disulfide bonds link Cys-85–Cys-161, Cys-88–Cys-153, and Cys-116–Cys-127. N-linked (GlcNAc...) asparagine glycosylation is present at Asn-171. Zn(2+) is bound by residues Asp-202 and His-204. Disulfide bonds link Cys-217/Cys-222 and Cys-223/Cys-246. Zn(2+) is bound by residues Asp-274 and Asn-314. Residues Asn-331 and Asn-391 are each glycosylated (N-linked (GlcNAc...) asparagine). Residues Cys-381 and Cys-427 are joined by a disulfide bond. His-421, His-453, and His-455 together coordinate Zn(2+). N-linked (GlcNAc...) asparagine glycosylation is present at Asn-499. The residue at position 504 (Ser-504) is a Phosphoserine. N-linked (GlcNAc...) asparagine glycosylation is present at Asn-516. Intrachain disulfides connect Cys-580/Cys-584 and Cys-590/Cys-603.

Belongs to the acid sphingomyelinase family. In terms of assembly, monomer. Interacts with SORT1; the interaction is required for SMPD1 targeting to lysosomes. The cofactor is Zn(2+). Post-translationally, proteolytically processed. Mature lysosomal form arises from C-terminal proteolytic processing of pro-sphingomyelin phosphodiesterase. In terms of processing, both lysosomal and secreted forms are glycosylated but they show a differential pattern of glycosylation. Phosphorylated at Ser-504 by PRKCD upon stress stimuli. Phosphorylation is required for secretion. Post-translationally, this form is generated following cleavage by CASP7 in the extracellular milieu. It shows increased activity.

It is found in the lysosome. The protein resides in the lipid droplet. The protein localises to the secreted. It localises to the extracellular space. The catalysed reaction is a sphingomyelin + H2O = phosphocholine + an N-acylsphing-4-enine + H(+). The enzyme catalyses N-(octadecanoyl)-sphing-4-enine-1-phosphocholine + H2O = N-octadecanoylsphing-4-enine + phosphocholine + H(+). It catalyses the reaction a 1,2-diacyl-sn-glycero-3-phosphocholine + H2O = phosphocholine + a 1,2-diacyl-sn-glycerol + H(+). It carries out the reaction 1,2-dihexadecanoyl-sn-glycero-3-phosphocholine + H2O = 1,2-dihexadecanoyl-sn-glycerol + phosphocholine + H(+). Its activity is regulated as follows. Hydrolysis of liposomal sphingomyelin is stimulated by incorporation of diacylglycerol (DAG), ceramide and free fatty acids into the liposomal membranes. Phosphatidylcholine hydrolysis is inhibited by incorporation of cholesterol, ceramide, DAG, monoacylglycerol and fatty acids. Functionally, converts sphingomyelin to ceramide. Exists as two enzymatic forms that arise from alternative trafficking of a single protein precursor, one that is targeted to the endolysosomal compartment, whereas the other is released extracellularly. However, in response to various forms of stress, lysosomal exocytosis may represent a major source of the secretory form. In terms of biological role, in the lysosomes, converts sphingomyelin to ceramide. Plays an important role in the export of cholesterol from the intraendolysosomal membranes. Also has phospholipase C activities toward 1,2-diacylglycerolphosphocholine and 1,2-diacylglycerolphosphoglycerol. Modulates stress-induced apoptosis through the production of ceramide. Its function is as follows. When secreted, modulates cell signaling with its ability to reorganize the plasma membrane by converting sphingomyelin to ceramide. Secreted form is increased in response to stress and inflammatory mediators such as IL1B, IFNG or TNF as well as upon infection with bacteria and viruses. Produces the release of ceramide in the outer leaflet of the plasma membrane playing a central role in host defense. Ceramide reorganizes these rafts into larger signaling platforms that are required to internalize bacteria, induce apoptosis and regulate the cytokine response in infected cells. In wounded cells, the lysosomal form is released extracellularly in the presence of Ca(2+) and promotes endocytosis and plasma membrane repair. This form is generated following cleavage by CASP7 in the extracellular milieu in response to bacterial infection. It shows increased ability to convert sphingomyelin to ceramide and promotes plasma membrane repair. Plasma membrane repair by ceramide counteracts the action of gasdermin-D (GSDMD) perforin (PRF1) pores that are formed in response to bacterial infection. This chain is Sphingomyelin phosphodiesterase (SMPD1), found in Bos taurus (Bovine).